We begin with the raw amino-acid sequence, 476 residues long: Bifunctional protein HldE (476 aa).

The segment at 1 to 318 is ribokinase; the sequence is MKPVLPDYSK…AEAVHGSKDT (318 aa). ATP is bound at residue 195–198; the sequence is NMSE. Residue aspartate 264 is part of the active site. The tract at residues 344 to 476 is cytidylyltransferase; it reads MTNGCFDILH…IIEAIKGGRG (133 aa).

In the N-terminal section; belongs to the carbohydrate kinase PfkB family. It in the C-terminal section; belongs to the cytidylyltransferase family. Homodimer.

It catalyses the reaction D-glycero-beta-D-manno-heptose 7-phosphate + ATP = D-glycero-beta-D-manno-heptose 1,7-bisphosphate + ADP + H(+). It carries out the reaction D-glycero-beta-D-manno-heptose 1-phosphate + ATP + H(+) = ADP-D-glycero-beta-D-manno-heptose + diphosphate. Its pathway is nucleotide-sugar biosynthesis; ADP-L-glycero-beta-D-manno-heptose biosynthesis; ADP-L-glycero-beta-D-manno-heptose from D-glycero-beta-D-manno-heptose 7-phosphate: step 1/4. The protein operates within nucleotide-sugar biosynthesis; ADP-L-glycero-beta-D-manno-heptose biosynthesis; ADP-L-glycero-beta-D-manno-heptose from D-glycero-beta-D-manno-heptose 7-phosphate: step 3/4. Catalyzes the phosphorylation of D-glycero-D-manno-heptose 7-phosphate at the C-1 position to selectively form D-glycero-beta-D-manno-heptose-1,7-bisphosphate. In terms of biological role, catalyzes the ADP transfer from ATP to D-glycero-beta-D-manno-heptose 1-phosphate, yielding ADP-D-glycero-beta-D-manno-heptose. In Vibrio cholerae serotype O1 (strain M66-2), this protein is Bifunctional protein HldE.